A 729-amino-acid polypeptide reads, in one-letter code: 1,4-alpha-glucan branching enzyme GlgB (729 aa).

D409 (nucleophile) is an active-site residue. The active-site Proton donor is the E462.

The protein belongs to the glycosyl hydrolase 13 family. GlgB subfamily. As to quaternary structure, monomer.

The enzyme catalyses Transfers a segment of a (1-&gt;4)-alpha-D-glucan chain to a primary hydroxy group in a similar glucan chain.. Its pathway is glycan biosynthesis; glycogen biosynthesis. Functionally, catalyzes the formation of the alpha-1,6-glucosidic linkages in glycogen by scission of a 1,4-alpha-linked oligosaccharide from growing alpha-1,4-glucan chains and the subsequent attachment of the oligosaccharide to the alpha-1,6 position. In Saccharophagus degradans (strain 2-40 / ATCC 43961 / DSM 17024), this protein is 1,4-alpha-glucan branching enzyme GlgB.